The sequence spans 1176 residues: Surface-layer 125 kDa protein (1176 aa).

A signal peptide spans 1–30; sequence MAKQNKGRKFFAASATAALVASAIVPVASA. SLH domains lie at 31-88, 89-152, and 153-216; these read AQLN…LEAE, GDVN…DLSE, and FADA…PKVD.

It localises to the secreted. The protein resides in the cell wall. It is found in the S-layer. The S-layer is a paracrystalline mono-layered assembly of proteins which coat the surface of bacteria. The polypeptide is Surface-layer 125 kDa protein (Lysinibacillus sphaericus (Bacillus sphaericus)).